The primary structure comprises 100 residues: Urease subunit gamma (100 aa).

It belongs to the urease gamma subunit family. As to quaternary structure, heterotrimer of UreA (gamma), UreB (beta) and UreC (alpha) subunits. Three heterotrimers associate to form the active enzyme.

It localises to the cytoplasm. The catalysed reaction is urea + 2 H2O + H(+) = hydrogencarbonate + 2 NH4(+). Its pathway is nitrogen metabolism; urea degradation; CO(2) and NH(3) from urea (urease route): step 1/1. This is Urease subunit gamma from Staphylococcus epidermidis (strain ATCC 35984 / DSM 28319 / BCRC 17069 / CCUG 31568 / BM 3577 / RP62A).